Reading from the N-terminus, the 354-residue chain is Guanine nucleotide-binding protein G(i) subunit alpha-1 (354 aa).

The N-myristoyl glycine moiety is linked to residue Gly-2. Cys-3 carries the S-palmitoyl cysteine lipid modification. The 323-residue stretch at 32–354 (REVKLLLLGA…KNNLKDCGLF (323 aa)) folds into the G-alpha domain. The tract at residues 35 to 48 (KLLLLGAGESGKST) is G1 motif. GTP is bound by residues 43–48 (ESGKST), 150–151 (DS), and 175–178 (LRTR). Ser-47 provides a ligand contact to Mg(2+). A G2 motif region spans residues 173–181 (DVLRTRVKT). A Mg(2+)-binding site is contributed by Thr-181. Residues 196 to 205 (FKMFDVGGQR) are G3 motif. Residues 200–204 (DVGGQ), 269–272 (NKKD), and Ala-326 each bind GTP. A G4 motif region spans residues 265-272 (ILFLNKKD). Positions 324-329 (TCATDT) are G5 motif.

Belongs to the G-alpha family. G(i/o/t/z) subfamily. As to quaternary structure, heterotrimeric G proteins are composed of 3 units; alpha, beta and gamma. The alpha chain contains the guanine nucleotide binding site. Part of a spindle orientation complex. Identified in complex with the beta subunit GNB1 and the gamma subunit GNG1. Identified in complex with the beta subunit GNB1 and the gamma subunit GNG2. GTP binding causes dissociation of the heterotrimer, liberating the individual subunits so that they can interact with downstream effector proteins. Myristoylation at Gly-2 is required for membrane anchoring before palmitoylation. In terms of processing, palmitoylation at Cys-3 varies with membrane lipid composition.

It localises to the nucleus. It is found in the cytoplasm. The protein resides in the cell membrane. Its subcellular location is the cytoskeleton. The protein localises to the microtubule organizing center. It localises to the centrosome. It is found in the cell cortex. The protein resides in the membrane. It catalyses the reaction GTP + H2O = GDP + phosphate + H(+). In terms of biological role, guanine nucleotide-binding proteins (G proteins) function as transducers downstream of G protein-coupled receptors (GPCRs) in numerous signaling cascades. The alpha chain contains the guanine nucleotide binding site and alternates between an active, GTP-bound state and an inactive, GDP-bound state. Signaling by an activated GPCR promotes GDP release and GTP binding. The alpha subunit has a low GTPase activity that converts bound GTP to GDP, thereby terminating the signal. Both GDP release and GTP hydrolysis are modulated by numerous regulatory proteins. Signaling is mediated via effector proteins, such as adenylate cyclase. Inhibits adenylate cyclase activity, leading to decreased intracellular cAMP levels. Required for cortical dynein-dynactin complex recruitment during metaphase. The chain is Guanine nucleotide-binding protein G(i) subunit alpha-1 (gnai1) from Oryzias latipes (Japanese rice fish).